Reading from the N-terminus, the 122-residue chain is Large ribosomal subunit protein uL18 (122 aa).

It belongs to the universal ribosomal protein uL18 family. Part of the 50S ribosomal subunit; part of the 5S rRNA/L5/L18/L25 subcomplex. Contacts the 5S and 23S rRNAs.

Its function is as follows. This is one of the proteins that bind and probably mediate the attachment of the 5S RNA into the large ribosomal subunit, where it forms part of the central protuberance. The polypeptide is Large ribosomal subunit protein uL18 (Trichlorobacter lovleyi (strain ATCC BAA-1151 / DSM 17278 / SZ) (Geobacter lovleyi)).